We begin with the raw amino-acid sequence, 851 residues long: M-phase phosphoprotein 8 (851 aa).

The segment at 21-54 is disordered; that stretch reads NIGRSPEVEGGGAAGEEKDAATKGTVAVGDSEED. 3 positions are modified to phosphoserine: Ser51, Ser85, and Ser136. Residues 59-118 enclose the Chromo domain; it reads FEVERILDMKCEGGKNLYKVRWKGYTSDDDTWEPEVHLEDCKEVLLEFRKKVAENKAKAV. The interval 80–87 is histone H3K9me3 binding; sequence WKGYTSDD. Residues 133-174 form a disordered region; it reads EADSDIDQQGDTKEDTSPRKKKKKIKYKEDKSPDDLRKKRAK. Thr144 carries the phosphothreonine modification. Ser149 and Ser164 each carry phosphoserine; by CDK1. Over residues 159–169 the composition is skewed to basic and acidic residues; the sequence is YKEDKSPDDLR. A phosphoserine mark is found at Ser188, Ser263, Ser267, and Ser274. Residues 240-302 form a disordered region; the sequence is REDVKDNRKT…KTGQDTVQES (63 aa). Residues 269–278 show a composition bias toward acidic residues; that stretch reads TLEDESEDFL. The span at 279–295 shows a compositional bias: basic and acidic residues; sequence SDNKEKQNVRTAKDKTG. Position 313 is a phosphoserine (Ser313). The segment at 315–428 is disordered; sequence EEAGTRVRRK…DKEEKARKEP (114 aa). The segment covering 329 to 364 has biased composition (basic and acidic residues); the sequence is RKFEEPKEIKKLENTNNFLERKMIPKKQRNQDKGRS. Residue Thr379 is modified to Phosphothreonine; by CDK1. 2 positions are modified to phosphoserine: Ser386 and Ser394. Positions 401–428 are enriched in basic and acidic residues; that stretch reads EKERKNEPKEKYQKRYDFDKEEKARKEP. Thr447 is modified (phosphothreonine). ANK repeat units follow at residues 591–620, 624–653, 657–686, and 690–719; these read TGMT…KVNG, NGTT…FVNV, NGET…DCNI, and HQNS…TLSR.

Homodimer. Interacts (via chromo domain) with histone H3K9me3. Has the highest affinity for H3K9me3, and lesser affinity for H3K9me2 and H3K9me1. Component of the HUSH complex; at least composed of TASOR, PPHLN1 and MPHOSPH8. Interacts with DNMT3, EHMT1 and SETDB1. Interacts with MORC2; the interaction associateS MORC2 with the HUSH complex which recruits MORC2 to heterochromatic loci. Interacts with ZNF638; leading to recruitment of the HUSH complex to unintegrated retroviral DNA. Interacts with TASOR. In terms of processing, phosphorylated in M (mitotic) phase. Phosphorylation by CDK1 promotes dissociation from chromatin.

It localises to the nucleus. The protein resides in the chromosome. Heterochromatin component that specifically recognizes and binds methylated 'Lys-9' of histone H3 (H3K9me) and promotes recruitment of proteins that mediate epigenetic repression. Mediates recruitment of the HUSH complex to H3K9me3 sites: the HUSH complex is recruited to genomic loci rich in H3K9me3 and is required to maintain transcriptional silencing by promoting recruitment of SETDB1, a histone methyltransferase that mediates further deposition of H3K9me3, as well as MORC2. Binds H3K9me and promotes DNA methylation by recruiting DNMT3A to target CpG sites; these can be situated within the coding region of the gene. Mediates down-regulation of CDH1 expression. Also represses L1 retrotransposons in collaboration with MORC2 and, probably, SETDB1, the silencing is dependent of repressive epigenetic modifications, such as H3K9me3 mark. Silencing events often occur within introns of transcriptionally active genes, and lead to the down-regulation of host gene expression. The HUSH complex is also involved in the silencing of unintegrated retroviral DNA by being recruited by ZNF638: some part of the retroviral DNA formed immediately after infection remains unintegrated in the host genome and is transcriptionally repressed. This is M-phase phosphoprotein 8 from Rattus norvegicus (Rat).